A 61-amino-acid polypeptide reads, in one-letter code: Short neurotoxin 2 (61 aa).

4 disulfides stabilise this stretch: Cys3/Cys23, Cys17/Cys40, Cys42/Cys53, and Cys54/Cys59.

This sequence belongs to the three-finger toxin family. Short-chain subfamily. Type I alpha-neurotoxin sub-subfamily. As to expression, expressed by the venom gland.

The protein resides in the secreted. Binds to muscle nicotinic acetylcholine receptor (nAChR) and inhibit acetylcholine from binding to the receptor, thereby impairing neuromuscular transmission. The protein is Short neurotoxin 2 of Hemachatus haemachatus (Rinkhals).